The following is a 260-amino-acid chain: Indole-3-glycerol phosphate synthase (260 aa).

The protein belongs to the TrpC family.

The enzyme catalyses 1-(2-carboxyphenylamino)-1-deoxy-D-ribulose 5-phosphate + H(+) = (1S,2R)-1-C-(indol-3-yl)glycerol 3-phosphate + CO2 + H2O. It functions in the pathway amino-acid biosynthesis; L-tryptophan biosynthesis; L-tryptophan from chorismate: step 4/5. The sequence is that of Indole-3-glycerol phosphate synthase from Acetivibrio thermocellus (strain ATCC 27405 / DSM 1237 / JCM 9322 / NBRC 103400 / NCIMB 10682 / NRRL B-4536 / VPI 7372) (Clostridium thermocellum).